The sequence spans 158 residues: MTELKLIHIFTDGSCLGNPGPGGYGIVMNYKGHTKEMSDGFALTTNNRMELLAPIVALEALKEPCKVILTSDSQYMRQGITTWIHGWKKKGWMTSNRTPVKNVDLWKRLDKAAQLHQIDWRWVKGHAGHPENERCDQLARAAAEASPTQVDEGYQPES.

One can recognise an RNase H type-1 domain in the interval 3-144; sequence ELKLIHIFTD…CDQLARAAAE (142 aa). Mg(2+)-binding residues include aspartate 12, glutamate 50, aspartate 72, and aspartate 136. Residues 137–158 form a disordered region; sequence QLARAAAEASPTQVDEGYQPES.

Belongs to the RNase H family. In terms of assembly, monomer. Requires Mg(2+) as cofactor.

The protein localises to the cytoplasm. The enzyme catalyses Endonucleolytic cleavage to 5'-phosphomonoester.. Endonuclease that specifically degrades the RNA of RNA-DNA hybrids. This Shewanella sp. (strain ANA-3) protein is Ribonuclease H.